The sequence spans 66 residues: Large ribosomal subunit protein bL33c (66 aa).

Belongs to the bacterial ribosomal protein bL33 family.

The protein localises to the plastid. The protein resides in the chloroplast. This Nandina domestica (Heavenly bamboo) protein is Large ribosomal subunit protein bL33c.